The primary structure comprises 108 residues: Cell cycle protein GpsB (108 aa).

Residues leucine 32–alanine 69 adopt a coiled-coil conformation.

The protein belongs to the GpsB family. As to quaternary structure, forms polymers through the coiled coil domains. Interacts with PBP1, MreC and EzrA.

The protein resides in the cytoplasm. In terms of biological role, divisome component that associates with the complex late in its assembly, after the Z-ring is formed, and is dependent on DivIC and PBP2B for its recruitment to the divisome. Together with EzrA, is a key component of the system that regulates PBP1 localization during cell cycle progression. Its main role could be the removal of PBP1 from the cell pole after pole maturation is completed. Also contributes to the recruitment of PBP1 to the division complex. Not essential for septum formation. The chain is Cell cycle protein GpsB from Streptococcus pyogenes serotype M28 (strain MGAS6180).